A 118-amino-acid chain; its full sequence is Small ribosomal subunit protein uS13 (118 aa).

The interval 99 to 118 is disordered; it reads GQRTRTNARTRKGPRKAIKK.

This sequence belongs to the universal ribosomal protein uS13 family. As to quaternary structure, part of the 30S ribosomal subunit. Forms a loose heterodimer with protein S19. Forms two bridges to the 50S subunit in the 70S ribosome.

Located at the top of the head of the 30S subunit, it contacts several helices of the 16S rRNA. In the 70S ribosome it contacts the 23S rRNA (bridge B1a) and protein L5 of the 50S subunit (bridge B1b), connecting the 2 subunits; these bridges are implicated in subunit movement. Contacts the tRNAs in the A and P-sites. In Xylella fastidiosa (strain M12), this protein is Small ribosomal subunit protein uS13.